The chain runs to 410 residues: Acyl-CoA-binding domain-containing protein 5-B (410 aa).

Residues 12–101 enclose the ACB domain; the sequence is AQKRFEAAVK…IQLIIETLPV (90 aa). Residues 23–32, 43–47, Lys-69, and Tyr-88 contribute to the an acyl-CoA site; these read IRSLPEDGSY and YSYYK. The segment covering 119 to 128 has biased composition (acidic residues); that stretch reads VEDDDDDDDE. Disordered stretches follow at residues 119–165, 221–242, and 254–320; these read VEDD…LDDY, SDDE…GSGV, and GANM…DRMD. Residues 326–355 are a coiled coil; that stretch reads TQITTILSELEDNMQDVLRRLTTLEQLTAS. A membrane pass occupies residues 382-404; the sequence is SPFTAVLTVLWPFAVHWLVQFYL.

It is found in the membrane. Its function is as follows. Binds medium- and long-chain acyl-CoA esters. The chain is Acyl-CoA-binding domain-containing protein 5-B (acbd5b) from Danio rerio (Zebrafish).